Here is a 544-residue protein sequence, read N- to C-terminus: Probable protein kinase UbiB (544 aa).

Residues 123–501 (DFDLVPLASA…KRQQATGKFL (379 aa)) enclose the Protein kinase domain. ATP contacts are provided by residues 129 to 137 (LASASIAQV) and lysine 152. The active-site Proton acceptor is aspartate 287. 2 consecutive transmembrane segments (helical) span residues 496–516 (ATGK…AILV) and 519–539 (TYEQ…LFSW).

This sequence belongs to the ABC1 family. UbiB subfamily.

The protein resides in the cell inner membrane. Its pathway is cofactor biosynthesis; ubiquinone biosynthesis [regulation]. Functionally, is probably a protein kinase regulator of UbiI activity which is involved in aerobic coenzyme Q (ubiquinone) biosynthesis. In Vibrio vulnificus (strain YJ016), this protein is Probable protein kinase UbiB.